The following is a 736-amino-acid chain: Prolyl 3-hydroxylase 3 (736 aa).

Positions 1–20 are cleaved as a signal peptide; sequence MLRLLRPLLLLLLLPPPGSP. TPR repeat units lie at residues 37–70, 154–187, and 216–249; these read PDLL…QAAL, REPY…NPMH, and HWAA…SLAQ. The interval 253–275 is disordered; sequence CRADCEGPEEQQGAEEEEDGAAS. Over residues 258-272 the composition is skewed to acidic residues; the sequence is EGPEEQQGAEEEEDG. One copy of the TPR 4 repeat lies at 316–349; sequence PNQLRRLHEAHAQVGNLSQAIENVLSVLLFYPED. Residues asparagine 331 and asparagine 462 are each glycosylated (N-linked (GlcNAc...) asparagine). One can recognise a Fe2OG dioxygenase domain in the interval 561–675; sequence THLVCRSAIE…RCALALWHTW (115 aa). Residues histidine 584, aspartate 586, and histidine 656 each coordinate Fe cation. Residue arginine 666 is part of the active site. Residues 681–709 are a coiled coil; that stretch reads EQEWIEAKELLQESQEEEEEEEEEMPSKD. The interval 689–736 is disordered; it reads ELLQESQEEEEEEEEEMPSKDPSPEPPSRRHQRVQDKTGRAPRVREEL. Residues 694–704 show a composition bias toward acidic residues; it reads SQEEEEEEEEE. Residues 721-736 are compositionally biased toward basic and acidic residues; sequence RVQDKTGRAPRVREEL. The Prevents secretion from ER motif lies at 733 to 736; sequence REEL.

This sequence belongs to the leprecan family. As to quaternary structure, identified in a complex with PLOD1 and P3H4. Fe cation is required as a cofactor. L-ascorbate serves as cofactor. As to expression, detected in fetal cartilage (at protein level). Weak expression in heart, lung, ovary and skeletal muscle.

The protein resides in the endoplasmic reticulum. The enzyme catalyses L-prolyl-[collagen] + 2-oxoglutarate + O2 = trans-3-hydroxy-L-prolyl-[collagen] + succinate + CO2. Functionally, part of a complex composed of PLOD1, P3H3 and P3H4 that catalyzes hydroxylation of lysine residues in collagen alpha chains and is required for normal assembly and cross-linkling of collagen fibrils. Required for normal hydroxylation of lysine residues in type I collagen chains in skin, bone, tendon, aorta and cornea. Required for normal skin stability via its role in hydroxylation of lysine residues in collagen alpha chains and in collagen fibril assembly. Apparently not required for normal prolyl 3-hydroxylation on collagen chains, possibly because it functions redundantly with other prolyl 3-hydroxylases. This is Prolyl 3-hydroxylase 3 from Homo sapiens (Human).